Consider the following 990-residue polypeptide: A-type ATP synthase subunit B (990 aa).

The 124-residue stretch at 491-614 (VAGLIASDGS…LQLLLKRLGV (124 aa)) folds into the DOD-type homing endonuclease domain.

It belongs to the ATPase alpha/beta chains family. As to quaternary structure, has multiple subunits with at least A(3), B(3), C, D, E, F, H, I and proteolipid K(x). This protein undergoes a protein self splicing that involves a post-translational excision of the VDE intervening region (intein) followed by peptide ligation.

The protein resides in the cell membrane. Functionally, component of the A-type ATP synthase that produces ATP from ADP in the presence of a proton gradient across the membrane. The B chain is a regulatory subunit. This Methanopyrus kandleri (strain AV19 / DSM 6324 / JCM 9639 / NBRC 100938) protein is A-type ATP synthase subunit B.